A 323-amino-acid chain; its full sequence is Beta-ketoacyl-[acyl-carrier-protein] synthase III (323 aa).

Active-site residues include cysteine 114 and histidine 250. The segment at 251–255 (QANKR) is ACP-binding. Asparagine 280 is a catalytic residue.

The protein belongs to the thiolase-like superfamily. FabH family. As to quaternary structure, homodimer.

The protein localises to the cytoplasm. It carries out the reaction malonyl-[ACP] + acetyl-CoA + H(+) = 3-oxobutanoyl-[ACP] + CO2 + CoA. It participates in lipid metabolism; fatty acid biosynthesis. In terms of biological role, catalyzes the condensation reaction of fatty acid synthesis by the addition to an acyl acceptor of two carbons from malonyl-ACP. Catalyzes the first condensation reaction which initiates fatty acid synthesis and may therefore play a role in governing the total rate of fatty acid production. Possesses both acetoacetyl-ACP synthase and acetyl transacylase activities. Its substrate specificity determines the biosynthesis of branched-chain and/or straight-chain of fatty acids. The chain is Beta-ketoacyl-[acyl-carrier-protein] synthase III from Hyphomonas neptunium (strain ATCC 15444).